Here is a 204-residue protein sequence, read N- to C-terminus: uncharacterized protein (204 aa).

This is an uncharacterized protein from Dictyostelium discoideum (Social amoeba).